Reading from the N-terminus, the 143-residue chain is Polyadenylate-binding protein-interacting protein 2 (143 aa).

Residues 11-21 (TLNPNAPVFDP) carry the PAM2-like motif.

The sequence is that of Polyadenylate-binding protein-interacting protein 2 (CID2) from Arabidopsis thaliana (Mouse-ear cress).